A 308-amino-acid polypeptide reads, in one-letter code: MGALNQTRVTEFIFLGLTDNWVLEILFFVPFTVTYMLTLLGNFLIVVTIVFTPRLHNPMYFFLSNLSFIDICHSSVTVPKMLEGLLLERKTISFDNCIAQLFFLHLFACSEIFLLTIMAYDRYVAICIPLHYSNVMNMKVCVQLVFALWLGGTIHSLVQTFLTIRLPYCGPNIIDSYFCDVPPVIKLACTDTYLTGILIVSNSGTISLVCFLALVTSYTVILFSLRKQSAEGRRKALSTCSAHFMVVALFFGPCIFLYTRPDSSFSIDKVVSVFYTVVTPLLNPLIYTLRNEEVKTAMKHLRQRRICS.

The Extracellular segment spans residues 1–24 (MGALNQTRVTEFIFLGLTDNWVLE). An N-linked (GlcNAc...) asparagine glycan is attached at N5. The chain crosses the membrane as a helical span at residues 25-45 (ILFFVPFTVTYMLTLLGNFLI). At 46–57 (VVTIVFTPRLHN) the chain is on the cytoplasmic side. The chain crosses the membrane as a helical span at residues 58–78 (PMYFFLSNLSFIDICHSSVTV). Residues 79-97 (PKMLEGLLLERKTISFDNC) are Extracellular-facing. A disulfide bond links C97 and C179. A helical membrane pass occupies residues 98-118 (IAQLFFLHLFACSEIFLLTIM). Residues H105 and C109 each contribute to the Cu cation site. At 119 to 143 (AYDRYVAICIPLHYSNVMNMKVCVQ) the chain is on the cytoplasmic side. The helical transmembrane segment at 144 to 164 (LVFALWLGGTIHSLVQTFLTI) threads the bilayer. Residues 165 to 204 (RLPYCGPNIIDSYFCDVPPVIKLACTDTYLTGILIVSNSG) are Extracellular-facing. Residues 205–225 (TISLVCFLALVTSYTVILFSL) form a helical membrane-spanning segment. At 226 to 236 (RKQSAEGRRKA) the chain is on the cytoplasmic side. A helical membrane pass occupies residues 237–257 (LSTCSAHFMVVALFFGPCIFL). Over 258–268 (YTRPDSSFSID) the chain is Extracellular. A Cu cation-binding site is contributed by R260. The helical transmembrane segment at 269-289 (KVVSVFYTVVTPLLNPLIYTL) threads the bilayer. The Cytoplasmic segment spans residues 290–308 (RNEEVKTAMKHLRQRRICS).

This sequence belongs to the G-protein coupled receptor 1 family. Expressed in olfactory epithelium, specifically in the olfactory sensory neurons of the septal organ.

The protein localises to the cell membrane. Its activity is regulated as follows. Copper binding enhances receptor activity in response to odorant binding. Functionally, olfactory receptor that is activated by the binding of organosulfur odorants with thioether groups such as (methylthio)methanethiol (MTMT) and bis(methylthiomethyl) disulfide. Also binds odorants cis-cyclooctene and tert-butyl mercaptan. The activity of this receptor is mediated by G proteins which activate adenylyl cyclase (Potential). The chain is Olfactory receptor 4E2 from Mus musculus (Mouse).